The primary structure comprises 123 residues: Large ribosomal subunit protein uL14 (123 aa).

This sequence belongs to the universal ribosomal protein uL14 family. Part of the 50S ribosomal subunit. Forms a cluster with proteins L3 and L19. In the 70S ribosome, L14 and L19 interact and together make contacts with the 16S rRNA in bridges B5 and B8.

Binds to 23S rRNA. Forms part of two intersubunit bridges in the 70S ribosome. The chain is Large ribosomal subunit protein uL14 from Buchnera aphidicola subsp. Acyrthosiphon kondoi (Acyrthosiphon kondoi symbiotic bacterium).